A 430-amino-acid chain; its full sequence is Histidine--tRNA ligase (430 aa).

Belongs to the class-II aminoacyl-tRNA synthetase family. As to quaternary structure, homodimer.

The protein resides in the cytoplasm. It carries out the reaction tRNA(His) + L-histidine + ATP = L-histidyl-tRNA(His) + AMP + diphosphate + H(+). This Clostridium acetobutylicum (strain ATCC 824 / DSM 792 / JCM 1419 / IAM 19013 / LMG 5710 / NBRC 13948 / NRRL B-527 / VKM B-1787 / 2291 / W) protein is Histidine--tRNA ligase (hisS).